Consider the following 252-residue polypeptide: 2-succinyl-6-hydroxy-2,4-cyclohexadiene-1-carboxylate synthase (252 aa).

It belongs to the AB hydrolase superfamily. MenH family. As to quaternary structure, monomer.

It carries out the reaction 5-enolpyruvoyl-6-hydroxy-2-succinyl-cyclohex-3-ene-1-carboxylate = (1R,6R)-6-hydroxy-2-succinyl-cyclohexa-2,4-diene-1-carboxylate + pyruvate. It participates in quinol/quinone metabolism; 1,4-dihydroxy-2-naphthoate biosynthesis; 1,4-dihydroxy-2-naphthoate from chorismate: step 3/7. Its pathway is quinol/quinone metabolism; menaquinone biosynthesis. Its function is as follows. Catalyzes a proton abstraction reaction that results in 2,5-elimination of pyruvate from 2-succinyl-5-enolpyruvyl-6-hydroxy-3-cyclohexene-1-carboxylate (SEPHCHC) and the formation of 2-succinyl-6-hydroxy-2,4-cyclohexadiene-1-carboxylate (SHCHC). This chain is 2-succinyl-6-hydroxy-2,4-cyclohexadiene-1-carboxylate synthase, found in Escherichia coli O9:H4 (strain HS).